We begin with the raw amino-acid sequence, 126 residues long: Histone H2B (126 aa).

Residues 1-12 are compositionally biased toward low complexity; sequence MPEPAKSAPAAK. The tract at residues 1–35 is disordered; that stretch reads MPEPAKSAPAAKKGSKKAVSKVQKKDGKKRRKSRK. Lys6 and Lys13 each carry N6-acetyllysine. Ser15 carries the post-translational modification Phosphoserine. 2 positions are modified to N6-acetyllysine: Lys16 and Lys21. Residue Ser113 is glycosylated (O-linked (GlcNAc) serine). Lys121 is covalently cross-linked (Glycyl lysine isopeptide (Lys-Gly) (interchain with G-Cter in ubiquitin)).

The protein belongs to the histone H2B family. In terms of assembly, the nucleosome is a histone octamer containing two molecules each of H2A, H2B, H3 and H4 assembled in one H3-H4 heterotetramer and two H2A-H2B heterodimers. The octamer wraps approximately 147 bp of DNA. Post-translationally, monoubiquitination of Lys-121 by BRE1 gives a specific tag for epigenetic transcriptional activation and is also prerequisite for histone H3 'Lys-4' and 'Lys-79' methylation. In terms of processing, phosphorylated on Ser-15 during apoptosis; which facilitates apoptotic chromatin condensation. GlcNAcylation at Ser-113 promotes monoubiquitination of Lys-121. It fluctuates in response to extracellular glucose, and associates with transcribed genes. In terms of tissue distribution, expressed by the skin granular glands.

Its subcellular location is the nucleus. The protein localises to the secreted. It localises to the chromosome. Core component of nucleosome. Nucleosomes wrap and compact DNA into chromatin, limiting DNA accessibility to the cellular machineries which require DNA as a template. Histones thereby play a central role in transcription regulation, DNA repair, DNA replication and chromosomal stability. DNA accessibility is regulated via a complex set of post-translational modifications of histones, also called histone code, and nucleosome remodeling. Functionally, has antibacterial activity against the Gram-negative bacteria E.coli and the Gram-positive bacteria S.aureus. The chain is Histone H2B from Zhangixalus schlegelii (Japanese gliding frog).